Consider the following 616-residue polypeptide: Dihydroxy-acid dehydratase (616 aa).

Asp81 provides a ligand contact to Mg(2+). Cys122 contributes to the [2Fe-2S] cluster binding site. Mg(2+) contacts are provided by Asp123 and Lys124. Lys124 is subject to N6-carboxylysine. Residue Cys195 participates in [2Fe-2S] cluster binding. Glu491 serves as a coordination point for Mg(2+). The active-site Proton acceptor is Ser517.

This sequence belongs to the IlvD/Edd family. In terms of assembly, homodimer. [2Fe-2S] cluster is required as a cofactor. Requires Mg(2+) as cofactor.

The catalysed reaction is (2R)-2,3-dihydroxy-3-methylbutanoate = 3-methyl-2-oxobutanoate + H2O. The enzyme catalyses (2R,3R)-2,3-dihydroxy-3-methylpentanoate = (S)-3-methyl-2-oxopentanoate + H2O. It participates in amino-acid biosynthesis; L-isoleucine biosynthesis; L-isoleucine from 2-oxobutanoate: step 3/4. Its pathway is amino-acid biosynthesis; L-valine biosynthesis; L-valine from pyruvate: step 3/4. In terms of biological role, functions in the biosynthesis of branched-chain amino acids. Catalyzes the dehydration of (2R,3R)-2,3-dihydroxy-3-methylpentanoate (2,3-dihydroxy-3-methylvalerate) into 2-oxo-3-methylpentanoate (2-oxo-3-methylvalerate) and of (2R)-2,3-dihydroxy-3-methylbutanoate (2,3-dihydroxyisovalerate) into 2-oxo-3-methylbutanoate (2-oxoisovalerate), the penultimate precursor to L-isoleucine and L-valine, respectively. In Klebsiella pneumoniae (strain 342), this protein is Dihydroxy-acid dehydratase.